A 395-amino-acid chain; its full sequence is HCLS1-binding protein 3 (395 aa).

Residue M1 is modified to N-acetylmethionine. S3 is modified (phosphoserine). The 124-residue stretch at 19–142 (GLDLSVPQHQ…EFLGTRAPGA (124 aa)) folds into the PX domain. Disordered stretches follow at residues 143–310 (TGLA…KELF) and 322–374 (LGSE…AMDE). Acidic residues predominate over residues 162-174 (DSDEAFDFFEQQD). S191 is modified (phosphoserine). The segment covering 194–206 (GEEEEEEEEEEVL) has biased composition (acidic residues). 2 stretches are compositionally biased toward basic and acidic residues: residues 249-260 (SDKKVSETRRPL) and 299-310 (RPEHGDASKELF). Position 254 is a phosphoserine (S254). Positions 329–339 (KPQTKPKPLVP) are enriched in pro residues. Residue K341 is modified to N6-acetyllysine.

As to quaternary structure, binds HCLS1. Interacts with the SH3 domain of HCLS1 in vitro. Ubiquitously expressed.

Its function is as follows. May be a modulator of IL-2 signaling. The sequence is that of HCLS1-binding protein 3 (Hs1bp3) from Mus musculus (Mouse).